The sequence spans 578 residues: Moesin/ezrin/radixin homolog 1 (578 aa).

The FERM domain occupies 1–296 (MSPKALNVRV…GNHELYMRRR (296 aa)). Residues 463–555 (ASTTPQHHHV…HRENVRQGRD (93 aa)) are disordered. A compositionally biased stretch (acidic residues) spans 475-484 (DENENEEELT). The span at 492-555 (VSRDLDTDEH…HRENVRQGRD (64 aa)) shows a compositional bias: basic and acidic residues. Thr559 carries the phosphothreonine modification.

In terms of assembly, interacts with wgn. Interacts with Mer and arm at the adherens junction. Interacts with cytoskeletal actin at apical buds of microvilli in the precellularised embryo. Interacts with PCID2 (possibly via FERM domain). Phosphorylated on Thr-559. In the oocyte this phosphorylation is induced by phosphatidylinositol 4,5-bisphosphate (PtdIns[4,5]P(2)) generated by sktl.

The protein resides in the cell junction. It localises to the adherens junction. It is found in the cell projection. Its subcellular location is the microvillus. The protein localises to the rhabdomere. The protein resides in the cell membrane. It localises to the cytoplasm. It is found in the cytoskeleton. Its subcellular location is the cell cortex. The protein localises to the cilium. The protein resides in the flagellum. It localises to the nucleus. It is found in the nucleoplasm. Its subcellular location is the chromosome. Its function is as follows. Involved in connections of major cytoskeletal structures to the plasma membrane. Together with wgn, involved in control of axon targeting of R8 and R2-R5 photoreceptors, independent of egr. In the nucleus, recruited to sites of active transcription by RNA polymerase II where it has a role in nuclear mRNA export together with the mRNA export factor PCID2 and other messenger ribonucleoprotein (mRNP) particles. In Drosophila melanogaster (Fruit fly), this protein is Moesin/ezrin/radixin homolog 1 (Moe).